Reading from the N-terminus, the 519-residue chain is Probable cytosol aminopeptidase (519 aa).

Mn(2+)-binding residues include lysine 283 and aspartate 288. Lysine 295 is a catalytic residue. The Mn(2+) site is built by aspartate 306, aspartate 365, and glutamate 367. Arginine 369 is a catalytic residue.

This sequence belongs to the peptidase M17 family. Requires Mn(2+) as cofactor.

Its subcellular location is the cytoplasm. The catalysed reaction is Release of an N-terminal amino acid, Xaa-|-Yaa-, in which Xaa is preferably Leu, but may be other amino acids including Pro although not Arg or Lys, and Yaa may be Pro. Amino acid amides and methyl esters are also readily hydrolyzed, but rates on arylamides are exceedingly low.. It carries out the reaction Release of an N-terminal amino acid, preferentially leucine, but not glutamic or aspartic acids.. Presumably involved in the processing and regular turnover of intracellular proteins. Catalyzes the removal of unsubstituted N-terminal amino acids from various peptides. The sequence is that of Probable cytosol aminopeptidase from Mycobacterium ulcerans (strain Agy99).